Consider the following 103-residue polypeptide: Conantokin-Br (103 aa).

An N-terminal signal peptide occupies residues 1–21 (MQLYTYLYLLVPLVTFHLILG). Residues 22-79 (TGTLDHGGALTERRSTDATALKPEPVLQKSAARSTDDNGKDRLTQMKRILKKRGKNAR) constitute a propeptide that is removed on maturation. The interval 34–64 (RRSTDATALKPEPVLQKSAARSTDDNGKDRL) is disordered. Residues 55-64 (STDDNGKDRL) are compositionally biased toward basic and acidic residues. 4 positions are modified to 4-carboxyglutamate: Glu82, Glu83, Glu89, and Glu93. The a divalent metal cation site is built by Glu89 and Glu93.

This sequence belongs to the conotoxin B superfamily. Ca(2+) serves as cofactor. It depends on Mg(2+) as a cofactor. Expressed by the venom duct.

The protein resides in the secreted. In terms of biological role, conantokins inhibit N-methyl-D-aspartate (NMDA) receptors. This toxin inhibits NR2 subunits N-methyl-D-aspartate (NMDA) receptor-mediated calcium influx in central nervous system neurons in the following order of preference: NR2B/GRIN2B (IC(50)=0.14 uM), NR2D/GRIN2D (IC(50)=0.31 uM), NR2A/GRIN2A (IC(50)=0.68 uM) and NR2C/GRIN2A (IC(50)=4.9 uM), when tested on rat receptors. The chain is Conantokin-Br from Conus sulcatus (Sulcate cone).